We begin with the raw amino-acid sequence, 139 residues long: MGRARRTVRAPAQHDALGGHALARKSVRSPSRRLRFGRRSDPDMPPQAPLDEMNELLSLREVRTPVRLRFGRRSEERAVPHIFPQEFLTQEQDRAVRAPSIRLRFGRRSDNNMFLLPYESALPQEVKANGSVEDDRQQE.

A propeptide spanning residues 1-23 is cleaved from the precursor; the sequence is MGRARRTVRAPAQHDALGGHALA. Residues 1 to 48 are disordered; the sequence is MGRARRTVRAPAQHDALGGHALARKSVRSPSRRLRFGRRSDPDMPPQA. Over residues 22 to 37 the composition is skewed to basic residues; it reads LARKSVRSPSRRLRFG. A Phenylalanine amide modification is found at F36. The propeptide occupies 40 to 62; the sequence is SDPDMPPQAPLDEMNELLSLREV. F70 is modified (phenylalanine amide). A propeptide spanning residues 74–96 is cleaved from the precursor; the sequence is SEERAVPHIFPQEFLTQEQDRAV. Phenylalanine amide is present on F105. Positions 109 to 139 are excised as a propeptide; that stretch reads SDNNMFLLPYESALPQEVKANGSVEDDRQQE.

The protein belongs to the NPY family. As to expression, sNPF peptide 1: Expressed in corpora cardiaca (CC), corpora allata (CA), antennal lobe (AL) and gnathal ganglion (GNG) (at protein level). Expression in AL detected in all animals, in GNG in most animals, expression in CC and CA in some animals (at protein level). sNPF peptide 2: Expressed in corpora cardiaca (CC), corpora allata (CA), antennal lobe (AL) and gnathal ganglion (GNG) (at protein level). Expression in AL detected in all animals, in GNG, CC and CA in most animals (at protein level). sNPF peptide 3: Expressed in corpora cardiaca (CC), corpora allata (CA), antennal lobe (AL) and gnathal ganglion (GNG) (at protein level). Expression detected in all animals (at protein level).

Its subcellular location is the secreted. In terms of biological role, plays a role in controlling food intake and regulating body size. This is Short neuropeptide F from Agrotis ipsilon (Black cutworm moth).